The chain runs to 453 residues: GTPase Der (453 aa).

2 consecutive EngA-type G domains span residues 4-169 (PIVA…SETP) and 177-352 (IKVA…RQFE). GTP contacts are provided by residues 10–17 (GRPNVGKS), 57–61 (DTGGL), 120–123 (NKCE), 183–190 (GRPNVGKS), 230–234 (DTAGI), and 295–298 (NKWD). Residues 353-438 (QRVTTSVINE…PIRLLWRGKK (86 aa)) enclose the KH-like domain.

This sequence belongs to the TRAFAC class TrmE-Era-EngA-EngB-Septin-like GTPase superfamily. EngA (Der) GTPase family. Associates with the 50S ribosomal subunit.

GTPase that plays an essential role in the late steps of ribosome biogenesis. The chain is GTPase Der from Acaryochloris marina (strain MBIC 11017).